The chain runs to 200 residues: WUSCHEL-related homeobox 9 (200 aa).

Positions 10-74 (VKCGRWNPTA…NHKARERHHH (65 aa)) form a DNA-binding region, homeobox; WUS-type. Positions 70 to 80 (ERHHHKKRRRG) are enriched in basic residues. The tract at residues 70 to 118 (ERHHHKKRRRGASSPDSGSNDDDGRAAAHEGDADLVLQPPESKREARSY) is disordered. A compositionally biased stretch (basic and acidic residues) spans 91 to 101 (DDGRAAAHEGD).

Belongs to the WUS homeobox family. Specifically expressed in the central cells of the quiescent center (QC) of the root.

Its subcellular location is the nucleus. Functionally, transcription factor which may be involved in the specification and maintenance of the stem cells (QC cells) in the root apical meristem (RAM). In Oryza sativa subsp. japonica (Rice), this protein is WUSCHEL-related homeobox 9 (WOX9).